We begin with the raw amino-acid sequence, 337 residues long: MSRIAVIGAGAWGTALAIVLGRRGGHAVRLWAYEQEVVASILARRTNDLFLPEASIPATVTVTDSLTDALNGAEIVLSVMPSHHVRRLFTQMLPHLSDDMVFVSATKGVEDQTYLRMTEVIEEVVTPRFSPRLVAVSGPTFAKEVAKGDPTAITAASSDEDLARTVQHEFSDPRFRVYTNRDVVGVELGGALKNVIAIAAGICDGLELGHNSVAALVTRGLAEITRLSLACGGHIETMAGLAGLGDLVLTCTGGLSRNRTVGVELGKGRKLADIIAGMRGMVAEGVLTTNAAIGLANKHGVEMPITQQMHAILHQGKSPSDAIRELMSRPSTTEVWL.

Positions 12 and 107 each coordinate NADPH. Sn-glycerol 3-phosphate contacts are provided by Lys107, Gly138, and Thr140. Ala142 provides a ligand contact to NADPH. Sn-glycerol 3-phosphate contacts are provided by Lys193, Asp246, Ser256, Arg257, and Asn258. The Proton acceptor role is filled by Lys193. Residue Arg257 participates in NADPH binding. NADPH is bound by residues Val282 and Glu284.

It belongs to the NAD-dependent glycerol-3-phosphate dehydrogenase family.

It is found in the cytoplasm. The enzyme catalyses sn-glycerol 3-phosphate + NAD(+) = dihydroxyacetone phosphate + NADH + H(+). The catalysed reaction is sn-glycerol 3-phosphate + NADP(+) = dihydroxyacetone phosphate + NADPH + H(+). Its pathway is membrane lipid metabolism; glycerophospholipid metabolism. Catalyzes the reduction of the glycolytic intermediate dihydroxyacetone phosphate (DHAP) to sn-glycerol 3-phosphate (G3P), the key precursor for phospholipid synthesis. This is Glycerol-3-phosphate dehydrogenase [NAD(P)+] from Koribacter versatilis (strain Ellin345).